Here is a 316-residue protein sequence, read N- to C-terminus: Acetyl-coenzyme A carboxylase carboxyl transferase subunit alpha (316 aa).

The CoA carboxyltransferase C-terminal domain occupies 39–293 (RLQDKSKALT…RGELLAQLKM (255 aa)).

The protein belongs to the AccA family. In terms of assembly, acetyl-CoA carboxylase is a heterohexamer composed of biotin carboxyl carrier protein (AccB), biotin carboxylase (AccC) and two subunits each of ACCase subunit alpha (AccA) and ACCase subunit beta (AccD).

It is found in the cytoplasm. It catalyses the reaction N(6)-carboxybiotinyl-L-lysyl-[protein] + acetyl-CoA = N(6)-biotinyl-L-lysyl-[protein] + malonyl-CoA. It functions in the pathway lipid metabolism; malonyl-CoA biosynthesis; malonyl-CoA from acetyl-CoA: step 1/1. In terms of biological role, component of the acetyl coenzyme A carboxylase (ACC) complex. First, biotin carboxylase catalyzes the carboxylation of biotin on its carrier protein (BCCP) and then the CO(2) group is transferred by the carboxyltransferase to acetyl-CoA to form malonyl-CoA. The sequence is that of Acetyl-coenzyme A carboxylase carboxyl transferase subunit alpha from Pseudomonas aeruginosa (strain UCBPP-PA14).